Here is a 298-residue protein sequence, read N- to C-terminus: Uricase (298 aa).

Catalysis depends on charge relay system residues Lys-18 and Thr-63. 7 residues coordinate urate: Thr-63, Asp-64, Phe-165, Arg-182, Val-229, Gln-230, and Asn-256. His-258 serves as the catalytic Charge relay system. The short motif at 296–298 (ARM) is the Microbody targeting signal element.

The protein belongs to the uricase family. In terms of assembly, homotetramer; dimer of dimers.

Its subcellular location is the peroxisome. It carries out the reaction urate + O2 + H2O = 5-hydroxyisourate + H2O2. The protein operates within purine metabolism; urate degradation; (S)-allantoin from urate: step 1/3. Competitively inhibited by xanthine. In terms of biological role, catalyzes the oxidation of uric acid to 5-hydroxyisourate, which is further processed to form (S)-allantoin. The sequence is that of Uricase from Danio rerio (Zebrafish).